A 146-amino-acid chain; its full sequence is Putative pre-16S rRNA nuclease (146 aa).

This sequence belongs to the YqgF nuclease family.

Its subcellular location is the cytoplasm. Functionally, could be a nuclease involved in processing of the 5'-end of pre-16S rRNA. The polypeptide is Putative pre-16S rRNA nuclease (Mycoplasmopsis pulmonis (strain UAB CTIP) (Mycoplasma pulmonis)).